Consider the following 204-residue polypeptide: TPR repeat-containing protein RHE_CH03534.1 (204 aa).

The N-terminal stretch at 1–29 is a signal peptide; sequence MSAMRLFALTSAMLPLAFILSTSPFPATA. 3 TPR repeats span residues 84-117, 118-151, and 153-185; these read INLL…KPDY, AESW…EPRH, and GALS…YPAD.

The chain is TPR repeat-containing protein RHE_CH03534.1 from Rhizobium etli (strain ATCC 51251 / DSM 11541 / JCM 21823 / NBRC 15573 / CFN 42).